The primary structure comprises 380 residues: Cytochrome b (380 aa).

Transmembrane regions (helical) follow at residues 34 to 54, 78 to 99, 114 to 134, and 179 to 199; these read FGSL…LLAM, WLIR…YMHI, WNTG…GYVL, and FFAL…IHLT. Heme b contacts are provided by His-84 and His-98. Residues His-183 and His-197 each contribute to the heme b site. His-202 is an a ubiquinone binding site. 4 consecutive transmembrane segments (helical) span residues 227–247, 289–309, 321–341, and 348–368; these read LKDI…ALFS, LGGV…PLLH, LSQL…WIGS, and FIII…ILFP.

It belongs to the cytochrome b family. The cytochrome bc1 complex contains 11 subunits: 3 respiratory subunits (MT-CYB, CYC1 and UQCRFS1), 2 core proteins (UQCRC1 and UQCRC2) and 6 low-molecular weight proteins (UQCRH/QCR6, UQCRB/QCR7, UQCRQ/QCR8, UQCR10/QCR9, UQCR11/QCR10 and a cleavage product of UQCRFS1). This cytochrome bc1 complex then forms a dimer. Heme b serves as cofactor.

Its subcellular location is the mitochondrion inner membrane. Its function is as follows. Component of the ubiquinol-cytochrome c reductase complex (complex III or cytochrome b-c1 complex) that is part of the mitochondrial respiratory chain. The b-c1 complex mediates electron transfer from ubiquinol to cytochrome c. Contributes to the generation of a proton gradient across the mitochondrial membrane that is then used for ATP synthesis. The polypeptide is Cytochrome b (MT-CYB) (Hydrobates pelagicus (European storm-petrel)).